The sequence spans 335 residues: MYPLIKKALFNLDAENAHQLAIQSLKLFGKTPFSLACSLPDNPTEVMGLRFKNPIGLAAGADKNGEAIDGFAKLGFGFIEVGTVTPVAQDGNPRPRQFRILEAEGIINRNGFNNLGVDVLIENVKKAKYNGILGINIGKNATTPIEHSLDDYQICLRKVYPHASYVTVNISSPNTKNLRSLQYGEALDDLLRSLKAEQAQLSQKFGGYKPLVLKIAPDLTAEEIASVADSLVHHQIDAVIAGNTTLSRDSVAGLPFADQQGGLSGKPLNALSTQLISQLSQELNGKLPIIGSGGIHSVQSGQEKINAGASLLQLYSAMIYQGPDLVRQLVRKISI.

FMN contacts are provided by residues 59–63 (AGADK) and threonine 83. Position 63 (lysine 63) interacts with substrate. Residue 108–112 (NRNGF) coordinates substrate. Residues asparagine 136 and asparagine 169 each coordinate FMN. Asparagine 169 contacts substrate. Serine 172 serves as the catalytic Nucleophile. Substrate is bound at residue asparagine 174. FMN is bound by residues lysine 214 and glycine 242. 243–244 (NT) is a binding site for substrate. FMN-binding positions include glycine 265, glycine 294, and 315 to 316 (YS).

The protein belongs to the dihydroorotate dehydrogenase family. Type 2 subfamily. In terms of assembly, monomer. The cofactor is FMN.

It localises to the cell membrane. It carries out the reaction (S)-dihydroorotate + a quinone = orotate + a quinol. It functions in the pathway pyrimidine metabolism; UMP biosynthesis via de novo pathway; orotate from (S)-dihydroorotate (quinone route): step 1/1. Catalyzes the conversion of dihydroorotate to orotate with quinone as electron acceptor. The sequence is that of Dihydroorotate dehydrogenase (quinone) from Glaesserella parasuis serovar 5 (strain SH0165) (Haemophilus parasuis).